The following is a 140-amino-acid chain: Nucleoside diphosphate kinase (140 aa).

Positions 11, 59, 87, 93, 104, and 114 each coordinate ATP. The Pros-phosphohistidine intermediate role is filled by His117.

This sequence belongs to the NDK family. In terms of assembly, homotetramer. Mg(2+) is required as a cofactor.

It is found in the cytoplasm. It catalyses the reaction a 2'-deoxyribonucleoside 5'-diphosphate + ATP = a 2'-deoxyribonucleoside 5'-triphosphate + ADP. The catalysed reaction is a ribonucleoside 5'-diphosphate + ATP = a ribonucleoside 5'-triphosphate + ADP. Major role in the synthesis of nucleoside triphosphates other than ATP. The ATP gamma phosphate is transferred to the NDP beta phosphate via a ping-pong mechanism, using a phosphorylated active-site intermediate. The sequence is that of Nucleoside diphosphate kinase from Bradyrhizobium diazoefficiens (strain JCM 10833 / BCRC 13528 / IAM 13628 / NBRC 14792 / USDA 110).